Here is a 607-residue protein sequence, read N- to C-terminus: Hemagglutinin glycoprotein (607 aa).

Topologically, residues methionine 1–tyrosine 37 are intravirion. A helical transmembrane segment spans residues leucine 38–valine 58. Residues arginine 59 to proline 607 lie on the Virion surface side of the membrane. Asparagine 149, asparagine 309, asparagine 391, asparagine 422, asparagine 456, asparagine 587, and asparagine 603 each carry an N-linked (GlcNAc...) asparagine; by host glycan.

The protein belongs to the paramyxoviruses hemagglutinin-neuraminidase family. Non-sialidase subfamily. Binds canine SLAMF1 at the cell surface.

It localises to the virion membrane. Its subcellular location is the host cell membrane. Functionally, attaches the virus to cell receptors and thereby initiating infection. Binding of H protein to the receptor induces a conformational change that allows the F protein to trigger virion/cell membranes fusion. The cellular receptor might be SLAM, and may explain the lymphotropism of the virus. The chain is Hemagglutinin glycoprotein (H) from Canine distemper virus (strain A92-27/4) (CDV).